The sequence spans 921 residues: Isoleucine--tRNA ligase (921 aa).

Residues 57–67 carry the 'HIGH' region motif; the sequence is PYANGELHMGH. Glu-552 lines the L-isoleucyl-5'-AMP pocket. Positions 593-597 match the 'KMSKS' region motif; the sequence is KMSKS. Lys-596 serves as a coordination point for ATP. 4 residues coordinate Zn(2+): Cys-888, Cys-891, Cys-908, and Cys-911.

The protein belongs to the class-I aminoacyl-tRNA synthetase family. IleS type 1 subfamily. As to quaternary structure, monomer. Zn(2+) is required as a cofactor.

The protein resides in the cytoplasm. The catalysed reaction is tRNA(Ile) + L-isoleucine + ATP = L-isoleucyl-tRNA(Ile) + AMP + diphosphate. Its function is as follows. Catalyzes the attachment of isoleucine to tRNA(Ile). As IleRS can inadvertently accommodate and process structurally similar amino acids such as valine, to avoid such errors it has two additional distinct tRNA(Ile)-dependent editing activities. One activity is designated as 'pretransfer' editing and involves the hydrolysis of activated Val-AMP. The other activity is designated 'posttransfer' editing and involves deacylation of mischarged Val-tRNA(Ile). The polypeptide is Isoleucine--tRNA ligase (Listeria welshimeri serovar 6b (strain ATCC 35897 / DSM 20650 / CCUG 15529 / CIP 8149 / NCTC 11857 / SLCC 5334 / V8)).